The sequence spans 290 residues: Fructose-1,6-bisphosphatase class 1 (290 aa).

Mg(2+)-binding residues include E78, D96, L98, and D99. Substrate-binding positions include 99–102 (DGSS), Y201, and K226. Residue E232 participates in Mg(2+) binding.

The protein belongs to the FBPase class 1 family. Homotetramer. The cofactor is Mg(2+).

The protein resides in the cytoplasm. The enzyme catalyses beta-D-fructose 1,6-bisphosphate + H2O = beta-D-fructose 6-phosphate + phosphate. It participates in carbohydrate biosynthesis; gluconeogenesis. The chain is Fructose-1,6-bisphosphatase class 1 from Helicobacter acinonychis (strain Sheeba).